The primary structure comprises 271 residues: tRNA pseudouridine synthase A (271 aa).

Catalysis depends on aspartate 51, which acts as the Nucleophile. Tyrosine 109 is a binding site for substrate.

It belongs to the tRNA pseudouridine synthase TruA family. Homodimer.

It carries out the reaction uridine(38/39/40) in tRNA = pseudouridine(38/39/40) in tRNA. Its function is as follows. Formation of pseudouridine at positions 38, 39 and 40 in the anticodon stem and loop of transfer RNAs. The protein is tRNA pseudouridine synthase A of Methylococcus capsulatus (strain ATCC 33009 / NCIMB 11132 / Bath).